Consider the following 316-residue polypeptide: MLKVLFHTMTLFGHLLSTPIYIVGDACGKDRDEYKNPPLRAFSFESQFLQIENAKFKTLPDQSLRYRQADTSLFATIPVTEMSGFLLSSRYLGAEVSWKSSKELQDTDLQAVGYFAFQDKSFYQYITLSVGAYTLALTNWQWSVLFSGMVDPENIEIGSGLYQVVLSSKYHASESLSVIMGVINEVGLHDKQAWPLLGFSYKPEDRLTLNCIYPVNFSAEYQCTPVCDLGVAYRLTRLRKKFPKNSLATSEGIFEYSGREIEGNIKLIFWPGQSLKMFGGYSVGNDISLANAHNEDEKIYKFGSSLFFGASANLHF.

Belongs to the chlamydial CPn_0441/CT_007/TC_0275 family.

This is an uncharacterized protein from Chlamydia trachomatis serovar D (strain ATCC VR-885 / DSM 19411 / UW-3/Cx).